The following is a 250-amino-acid chain: 2,3-bisphosphoglycerate-dependent phosphoglycerate mutase (250 aa).

Residues 10–17 (RHGESVWN), 23–24 (TG), Arg62, 89–92 (ERHY), Lys100, 116–117 (RR), and 185–186 (GN) each bind substrate. His11 (tele-phosphohistidine intermediate) is an active-site residue. Residue Glu89 is the Proton donor/acceptor of the active site.

This sequence belongs to the phosphoglycerate mutase family. BPG-dependent PGAM subfamily. In terms of assembly, homodimer.

It carries out the reaction (2R)-2-phosphoglycerate = (2R)-3-phosphoglycerate. It participates in carbohydrate degradation; glycolysis; pyruvate from D-glyceraldehyde 3-phosphate: step 3/5. Catalyzes the interconversion of 2-phosphoglycerate and 3-phosphoglycerate. The chain is 2,3-bisphosphoglycerate-dependent phosphoglycerate mutase from Proteus mirabilis (strain HI4320).